We begin with the raw amino-acid sequence, 307 residues long: UDP-N-acetylenolpyruvoylglucosamine reductase (307 aa).

The FAD-binding PCMH-type domain occupies 33 to 197 (TGGNADFYIT…LEAAFTLAPG (165 aa)). Residue arginine 176 is part of the active site. The active-site Proton donor is serine 226. The active site involves glutamate 296.

It belongs to the MurB family. FAD is required as a cofactor.

The protein localises to the cytoplasm. The catalysed reaction is UDP-N-acetyl-alpha-D-muramate + NADP(+) = UDP-N-acetyl-3-O-(1-carboxyvinyl)-alpha-D-glucosamine + NADPH + H(+). It functions in the pathway cell wall biogenesis; peptidoglycan biosynthesis. Its function is as follows. Cell wall formation. The protein is UDP-N-acetylenolpyruvoylglucosamine reductase of Staphylococcus aureus (strain NCTC 8325 / PS 47).